Here is a 115-residue protein sequence, read N- to C-terminus: NADH-ubiquinone oxidoreductase chain 3 (115 aa).

A run of 3 helical transmembrane segments spans residues 3–23 (LPLA…IAFW), 55–75 (FFLV…LLPL), and 86–106 (LMLT…AYEW).

Belongs to the complex I subunit 3 family. In terms of assembly, core subunit of respiratory chain NADH dehydrogenase (Complex I) which is composed of 45 different subunits. Interacts with TMEM186. Interacts with TMEM242.

The protein resides in the mitochondrion inner membrane. It carries out the reaction a ubiquinone + NADH + 5 H(+)(in) = a ubiquinol + NAD(+) + 4 H(+)(out). In terms of biological role, core subunit of the mitochondrial membrane respiratory chain NADH dehydrogenase (Complex I) which catalyzes electron transfer from NADH through the respiratory chain, using ubiquinone as an electron acceptor. Essential for the catalytic activity of complex I. In Lemur catta (Ring-tailed lemur), this protein is NADH-ubiquinone oxidoreductase chain 3.